The primary structure comprises 374 residues: Glutamine synthetase (374 aa).

The segment at 2–25 (TTSASSHLNKGIKQVYMSLPQGEK) is required for glutamine-induced ubiquitination by CRL4(CRBN) and proteasomal degradation. N6-acetyllysine is present on residues lysine 11 and lysine 14. The GS beta-grasp domain occupies 24-106 (EKVQAMYIWI…VLCESFQVQF (83 aa)). Positions 114–374 (LRHTCKRIMD…TGDEPFQYKN (261 aa)) constitute a GS catalytic domain. Glutamate 135 provides a ligand contact to ATP. Residues glutamate 135, glutamate 137, glutamate 197, and glutamate 204 each coordinate Mn(2+). Residue 204–209 (EFQIGP) participates in ATP binding. Position 247-248 (247-248 (NW)) interacts with L-glutamate. Residue histidine 254 coordinates Mn(2+). ATP-binding positions include 256–258 (NFS), arginine 320, and arginine 325. Arginine 320 provides a ligand contact to L-glutamate. 337–339 (YFE) lines the ADP pocket. Residue glutamate 339 participates in Mn(2+) binding. Arginine 341 provides a ligand contact to L-glutamate. At serine 344 the chain carries Phosphoserine.

Belongs to the glutamine synthetase family. In terms of assembly, decamer; composed of two pentamers. Interacts with PALMD. Interacts with RHOJ. Interacts with BEST2; this interaction tethers a fraction of GLUL to the membrane, causing a decrease of cytosolic glutamine synthase (GS) activity and inhibits the chloride channel activity of BEST2 by affecting the gating at the aperture in the absence of intracellular glutamate. Requires Mg(2+) as cofactor. Mn(2+) serves as cofactor. Post-translationally, palmitoylated; undergoes autopalmitoylation. Acetylated by EP300/p300; acetylation is stimulated by increased glutamine levels and promotes ubiquitin-mediated proteasomal degradation. In terms of processing, ubiquitinated by ZNRF1. Ubiquitinated by the DCX (DDB1-CUL4-X-box) E3 ubiquitin-protein ligase complex called CRL4(CRBN), leading to proteasomal degradation.

Its subcellular location is the cytoplasm. The protein resides in the cytosol. It is found in the microsome. The protein localises to the mitochondrion. It localises to the cell membrane. The catalysed reaction is L-glutamate + NH4(+) + ATP = L-glutamine + ADP + phosphate + H(+). It catalyses the reaction L-cysteinyl-[protein] + hexadecanoyl-CoA = S-hexadecanoyl-L-cysteinyl-[protein] + CoA. With respect to regulation, glutamine synthetase activity is inhibited by methionine sulfoximine (MSO). Glutamine synthetase that catalyzes the ATP-dependent conversion of glutamate and ammonia to glutamine. Its role depends on tissue localization: in the brain, it regulates the levels of toxic ammonia and converts neurotoxic glutamate to harmless glutamine, whereas in the liver, it is one of the enzymes responsible for the removal of ammonia. Plays a key role in ammonium detoxification during erythropoiesis: the glutamine synthetase activity is required to remove ammonium generated by porphobilinogen deaminase (HMBS) during heme biosynthesis to prevent ammonium accumulation and oxidative stress. Essential for proliferation of fetal skin fibroblasts. Independently of its glutamine synthetase activity, required for endothelial cell migration during vascular development. Involved in angiogenesis by regulating membrane localization and activation of the GTPase RHOJ, possibly by promoting RHOJ palmitoylation. May act as a palmitoyltransferase for RHOJ: able to autopalmitoylate and then transfer the palmitoyl group to RHOJ. Plays a role in ribosomal 40S subunit biogenesis. Through the interaction with BEST2, inhibits BEST2 channel activity by affecting the gating at the aperture in the absence of intracellular L-glutamate, but sensitizes BEST2 to intracellular L-glutamate, which promotes the opening of BEST2 and thus relieves its inhibitory effect on BEST2. The chain is Glutamine synthetase from Macaca fascicularis (Crab-eating macaque).